Reading from the N-terminus, the 579-residue chain is Pre-mRNA-processing factor 17 (579 aa).

A compositionally biased stretch (low complexity) spans 1–19 (MSAAIAALAASYGSGSGSE). Disordered regions lie at residues 1-47 (MSAA…PSSK) and 204-237 (DVAK…PGEE). Position 46 is a phosphoserine (Ser-46). WD repeat units lie at residues 286–326 (GHTK…RCLR), 330–369 (GHSK…CISR), 371–413 (TNRK…IVQE), 416–455 (RHLG…DFKY), 459–498 (PSMH…RLNK), 504–545 (GHMV…LYSR), and 548–578 (AHDK…IKLW).

Component of the pre-catalytic and catalytic spliceosome complexes. Component of the postcatalytic spliceosome P complex. Interacts with PPIL1; this interaction leads to CDC40 isomerization. Post-translationally, undergoes isomerization of the peptide bond between Gly-94 and Pro-95. The reaction is catalyzed by PPIL1.

The protein localises to the nucleus. It is found in the nucleus speckle. Required for pre-mRNA splicing as component of the activated spliceosome. Plays an important role in embryonic brain development; this function does not require proline isomerization. The protein is Pre-mRNA-processing factor 17 (CDC40) of Homo sapiens (Human).